A 218-amino-acid chain; its full sequence is Superoxide dismutase [Mn] 1 (218 aa).

Residues His-43, His-98, Asp-180, and His-184 each contribute to the Mn(2+) site.

The protein belongs to the iron/manganese superoxide dismutase family. In terms of assembly, homodimer. It depends on Mn(2+) as a cofactor.

The enzyme catalyses 2 superoxide + 2 H(+) = H2O2 + O2. Functionally, destroys superoxide anion radicals which are normally produced within the cells and which are toxic to biological systems. This is Superoxide dismutase [Mn] 1 (sodA1) from Bacillus cereus (strain ATCC 14579 / DSM 31 / CCUG 7414 / JCM 2152 / NBRC 15305 / NCIMB 9373 / NCTC 2599 / NRRL B-3711).